A 479-amino-acid chain; its full sequence is Glutamyl-tRNA(Gln) amidotransferase subunit A (479 aa).

Active-site charge relay system residues include K75 and S150. S174 (acyl-ester intermediate) is an active-site residue.

This sequence belongs to the amidase family. GatA subfamily. Heterotrimer of A, B and C subunits.

It catalyses the reaction L-glutamyl-tRNA(Gln) + L-glutamine + ATP + H2O = L-glutaminyl-tRNA(Gln) + L-glutamate + ADP + phosphate + H(+). In terms of biological role, allows the formation of correctly charged Gln-tRNA(Gln) through the transamidation of misacylated Glu-tRNA(Gln) in organisms which lack glutaminyl-tRNA synthetase. The reaction takes place in the presence of glutamine and ATP through an activated gamma-phospho-Glu-tRNA(Gln). This chain is Glutamyl-tRNA(Gln) amidotransferase subunit A, found in Synechococcus sp. (strain ATCC 27144 / PCC 6301 / SAUG 1402/1) (Anacystis nidulans).